A 437-amino-acid polypeptide reads, in one-letter code: MRIALINSQQDVGGVNIKNHLQTLLAAGGRWPLAEQHELTFYEVAGRLIHQDRIDEEVDADLILFISRHASVHPTPALTVHVTGNYEGADLGGEPGRLAPAAPAWMHAILGNLAARAPEGYRVSYEVTHHGPTALSTPSLFVEIGSTATEWADPAAGRAVAESILAAEPQETIDLLGFGGTHYAVRQTEIALSSRGAFGHMVPTRQIGAVDPVLLRTMQEASGAVAGYIDRKSLTKDDAGRIERMLGDAALPLLSESEIQEASGLAWAAYLRVRELAEEIAPGSRVRIHDLRGEGTPAVVRIGPGLIEETIKSDRSGFLKGLDELPVAHLSKGSNEVLSTFICFENESSRLASDITTLCVKLLLICENAVIDGDHLVLRKVRFDPEKARRHGIPKGPLFAMLAGGKAVEIEGRMVTPDAVQTTSVKRIHIPGLERYI.

It belongs to the DtdA deacylase family. Monomer. The cofactor is Zn(2+).

It catalyses the reaction a D-aminoacyl-tRNA + H2O = a tRNA + a D-alpha-amino acid + H(+). It carries out the reaction glycyl-tRNA(Ala) + H2O = tRNA(Ala) + glycine + H(+). In terms of biological role, D-aminoacyl-tRNA deacylase with broad substrate specificity. By recycling D-aminoacyl-tRNA to D-amino acids and free tRNA molecules, this enzyme counteracts the toxicity associated with the formation of D-aminoacyl-tRNA entities in vivo. In Methanoculleus marisnigri (strain ATCC 35101 / DSM 1498 / JR1), this protein is D-aminoacyl-tRNA deacylase.